The following is a 919-amino-acid chain: Aminodeoxychorismate synthase, chloroplastic (919 aa).

A chloroplast-targeting transit peptide spans 1 to 45; sequence MNMNFSFCSTSSELSYPSENVLRFSVASRLFSPKWKKSFISLPCR. The Glutamine amidotransferase type-1 domain occupies 86–342; sequence RTLLIDNYDS…KDITVNYWSR (257 aa). C172 (nucleophile) is an active-site residue. Active-site residues include H316 and E318. Residues 436 to 910 are PABB component; that stretch reads IFMELFGKNR…KTRAPANAVM (475 aa).

In the C-terminal section; belongs to the anthranilate synthase component I family.

It is found in the plastid. It localises to the chloroplast. It carries out the reaction chorismate + L-glutamine = 4-amino-4-deoxychorismate + L-glutamate. It participates in cofactor biosynthesis; tetrahydrofolate biosynthesis; 4-aminobenzoate from chorismate: step 1/2. Activated by chorismate and inhibited by dihydrofolate and methotrexate. Its function is as follows. Bifunctional enzyme that catalyzes the biosynthesis of 4-amino-4-deoxychorismate (ADC) from chorismate and glutamine. In the first step, a glutamine amidotransferase generates ammonia that is channelled between the binding sites of glutamine and chorismate and used along with chorismate in the second step, catalyzed by aminodeoxychorismate synthase, to produce ADC. Required for the synthesis of 4-aminobenzoate (PABA), an important component in tetrahydrofolate biosynthesis. Does not possess ADC lyase activity. The polypeptide is Aminodeoxychorismate synthase, chloroplastic (ADCS) (Arabidopsis thaliana (Mouse-ear cress)).